The sequence spans 968 residues: Translation initiation factor IF-2 (968 aa).

A compositionally biased stretch (low complexity) spans 305-319; it reads KPAAAAGAPGAPGAA. Residues 305 to 376 form a disordered region; that stretch reads KPAAAAGAPG…NDRDARPEST (72 aa). Positions 468 to 635 constitute a tr-type G domain; it reads PRAPVVTVMG…QVLLQAEVLE (168 aa). The segment at 477-484 is G1; that stretch reads GHVDHGKT. 477–484 lines the GTP pocket; sequence GHVDHGKT. Residues 502–506 are G2; sequence GITQH. The segment at 523–526 is G3; sequence DTPG. GTP contacts are provided by residues 523–527 and 577–580; these read DTPGH and NKID. Residues 577 to 580 form a G4 region; sequence NKID. The interval 613 to 615 is G5; that stretch reads SAR.

This sequence belongs to the TRAFAC class translation factor GTPase superfamily. Classic translation factor GTPase family. IF-2 subfamily.

The protein localises to the cytoplasm. One of the essential components for the initiation of protein synthesis. Protects formylmethionyl-tRNA from spontaneous hydrolysis and promotes its binding to the 30S ribosomal subunits. Also involved in the hydrolysis of GTP during the formation of the 70S ribosomal complex. The protein is Translation initiation factor IF-2 of Polaromonas sp. (strain JS666 / ATCC BAA-500).